The following is a 386-amino-acid chain: TGF-beta-activated kinase 1 and MAP3K7-binding protein 1 (386 aa).

Residues H22 to L327 form the PPM-type phosphatase domain.

As to quaternary structure, interacts with mom-4; the interaction enhances mom-4 kinase activity.

Its function is as follows. Involved in the Wnt signaling pathway by regulating mom-4 kinase activity. The polypeptide is TGF-beta-activated kinase 1 and MAP3K7-binding protein 1 (Caenorhabditis elegans).